Reading from the N-terminus, the 700-residue chain is UvrABC system protein B (700 aa).

In terms of domain architecture, Helicase ATP-binding spans 26-183 (SGLHRGDRIQ…RALVGIQYLR (158 aa)). 39–46 (GVTGSGKT) is an ATP binding site. Residues 92 to 115 (YYDYYQPEAYVPSSDTYIEKDASI) carry the Beta-hairpin motif. One can recognise a Helicase C-terminal domain in the interval 430–596 (QVDDLLHEIR…GVTKSVDEVR (167 aa)). Residues 608 to 627 (REGEAPAPRRLASESAPRSR) are disordered. A UVR domain is found at 631-666 (ETLVGELEIAMREAAVALDFEAAARLRDQLFEVRTA). The segment at 667–700 (LGQAPSEARGNAQAPKRPPGSAPQRRAGGGRRGR) is disordered.

This sequence belongs to the UvrB family. Forms a heterotetramer with UvrA during the search for lesions. Interacts with UvrC in an incision complex.

The protein resides in the cytoplasm. Its function is as follows. The UvrABC repair system catalyzes the recognition and processing of DNA lesions. A damage recognition complex composed of 2 UvrA and 2 UvrB subunits scans DNA for abnormalities. Upon binding of the UvrA(2)B(2) complex to a putative damaged site, the DNA wraps around one UvrB monomer. DNA wrap is dependent on ATP binding by UvrB and probably causes local melting of the DNA helix, facilitating insertion of UvrB beta-hairpin between the DNA strands. Then UvrB probes one DNA strand for the presence of a lesion. If a lesion is found the UvrA subunits dissociate and the UvrB-DNA preincision complex is formed. This complex is subsequently bound by UvrC and the second UvrB is released. If no lesion is found, the DNA wraps around the other UvrB subunit that will check the other stand for damage. The polypeptide is UvrABC system protein B (Gemmatimonas aurantiaca (strain DSM 14586 / JCM 11422 / NBRC 100505 / T-27)).